A 354-amino-acid chain; its full sequence is Chorismate synthase (354 aa).

R48 provides a ligand contact to NADP(+). FMN contacts are provided by residues 125-127 (RAS), G277, 292-296 (KPIPS), and R318.

The protein belongs to the chorismate synthase family. Homotetramer. FMNH2 is required as a cofactor.

The catalysed reaction is 5-O-(1-carboxyvinyl)-3-phosphoshikimate = chorismate + phosphate. It participates in metabolic intermediate biosynthesis; chorismate biosynthesis; chorismate from D-erythrose 4-phosphate and phosphoenolpyruvate: step 7/7. Functionally, catalyzes the anti-1,4-elimination of the C-3 phosphate and the C-6 proR hydrogen from 5-enolpyruvylshikimate-3-phosphate (EPSP) to yield chorismate, which is the branch point compound that serves as the starting substrate for the three terminal pathways of aromatic amino acid biosynthesis. This reaction introduces a second double bond into the aromatic ring system. The chain is Chorismate synthase from Nitratidesulfovibrio vulgaris (strain DP4) (Desulfovibrio vulgaris).